Reading from the N-terminus, the 332-residue chain is Nuclear migration protein nudC (332 aa).

A disordered region spans residues Arg-122 to Met-161. The region spanning Cys-168–Val-259 is the CS domain.

It belongs to the nudC family. In terms of assembly, interacts with PCID2.

The protein localises to the cytoplasm. Functionally, chaperone protein with functions in nuclear localization and cytoplasmic mRNA trafficking. In postmitotic neurons, acts with nudE downstream of dar1 to ensure correct positioning of the nuclei in primary dendrites and as a consequence, is required for determining multipolar neuron morphology. Stabilizes PCID2 in the cytoplasm and thereby is required for promoting cytoplasmic mRNA trafficking. The chain is Nuclear migration protein nudC from Drosophila melanogaster (Fruit fly).